Reading from the N-terminus, the 69-residue chain is Large ribosomal subunit protein uL29 (69 aa).

It belongs to the universal ribosomal protein uL29 family.

The protein is Large ribosomal subunit protein uL29 of Rhodopseudomonas palustris (strain BisB5).